The following is an 804-amino-acid chain: Probable replication endonuclease from prophage-like region (804 aa).

Active-site O-(5'-phospho-DNA)-tyrosine intermediate residues include Tyr498 and Tyr502.

This sequence belongs to the phage GPA family.

Possible endonuclease which induces a single-strand cut and initiates DNA replication. The polypeptide is Probable replication endonuclease from prophage-like region (Escherichia coli O6:H1 (strain CFT073 / ATCC 700928 / UPEC)).